The primary structure comprises 159 residues: Small ribosomal subunit protein uS7c (159 aa).

The protein belongs to the universal ribosomal protein uS7 family. In terms of assembly, part of the 30S ribosomal subunit.

The protein resides in the plastid. Its subcellular location is the chloroplast. Its function is as follows. One of the primary rRNA binding proteins, it binds directly to 16S rRNA where it nucleates assembly of the head domain of the 30S subunit. The protein is Small ribosomal subunit protein uS7c (rps7) of Bigelowiella natans (Pedinomonas minutissima).